The following is a 218-amino-acid chain: Redox-sensing transcriptional repressor Rex (218 aa).

The segment at residues tryptophan 25–valine 64 is a DNA-binding region (H-T-H motif). Glycine 99 to glycine 104 contributes to the NAD(+) binding site.

This sequence belongs to the transcriptional regulatory Rex family. As to quaternary structure, homodimer.

It localises to the cytoplasm. Modulates transcription in response to changes in cellular NADH/NAD(+) redox state. In Porphyromonas gingivalis (strain ATCC 33277 / DSM 20709 / CIP 103683 / JCM 12257 / NCTC 11834 / 2561), this protein is Redox-sensing transcriptional repressor Rex.